The chain runs to 113 residues: U-scoloptoxin(16)-Sa1a (113 aa).

The first 29 residues, 1–29 (MAPPSNPLFVVLCWALFAYLMLVLRDIQA), serve as a signal peptide directing secretion.

The protein belongs to the scoloptoxin-16 family. Contains 4 disulfide bonds. Expressed by the venom gland.

The protein localises to the secreted. The chain is U-scoloptoxin(16)-Sa1a from Scolopendra alternans (Florida Keys giant centipede).